Here is a 266-residue protein sequence, read N- to C-terminus: 15-hydroxyprostaglandin dehydrogenase [NAD(+)] (266 aa).

Residues 12-20 (GAAQGIGKA), 36-37 (DW), 63-65 (CDV), and Asn91 each bind NAD(+). Substrate-binding residues include Ser138 and Gln148. Residue Tyr151 is the Proton acceptor of the active site. NAD(+)-binding positions include 151 to 155 (YCASK) and 186 to 188 (VKT).

It belongs to the short-chain dehydrogenases/reductases (SDR) family. In terms of assembly, homodimer.

It is found in the cytoplasm. It carries out the reaction prostaglandin E2 + NAD(+) = 15-oxoprostaglandin E2 + NADH + H(+). The enzyme catalyses (15S)-hydroxy-(5Z,8Z,11Z,13E)-eicosatetraenoate + NAD(+) = 15-oxo-(5Z,8Z,11Z,13E)-eicosatetraenoate + NADH + H(+). The catalysed reaction is (11R)-hydroxy-(5Z,8Z,12E,14Z)-eicosatetraenoate + NAD(+) = 11-oxo-(5Z,8Z,12E,14Z)-eicosatetraenoate + NADH + H(+). It catalyses the reaction lipoxin A4 + NAD(+) = 15-oxo-(5S,6R)-dihydroxy-(7E,9E,11Z,13E)-eicosatetraenoate + NADH + H(+). It carries out the reaction 15-oxo-(5S,6R)-dihydroxy-(7E,9E,11Z)-eicosatrienoate + NADH + H(+) = (5S,6R,15S)-trihydroxy-(7E,9E,11Z)-eicosatrienoate + NAD(+). The enzyme catalyses prostaglandin A1 + NAD(+) = 15-oxo-prostaglandin A1 + NADH + H(+). The catalysed reaction is prostaglandin E1 + NAD(+) = 15-oxoprostaglandin E1 + NADH + H(+). It catalyses the reaction 14-hydroxy-(4Z,7Z,10Z,12E,16Z,19Z)-docosahexaenoate + NAD(+) = 14-oxo-(4Z,7Z,10Z,12E,16Z,19Z)-docosahexaenoate + NADH + H(+). It carries out the reaction resolvin E1 + NAD(+) = 18-oxo-resolvin E1 + NADH + H(+). The enzyme catalyses resolvin D1 + NAD(+) = 8-oxoresolvin D1 + NADH + H(+). The catalysed reaction is resolvin D1 + NAD(+) = 17-oxoresolvin D1 + NADH + H(+). It catalyses the reaction resolvin D2 + NAD(+) = 7-oxoresolvin D2 + NADH + H(+). It carries out the reaction resolvin D2 + NAD(+) = 16-oxoresolvin D2 + NADH + H(+). Its function is as follows. Catalyzes the NAD-dependent dehydrogenation (oxidation) of a broad array of hydroxylated polyunsaturated fatty acids (mainly eicosanoids and docosanoids, including prostaglandins, lipoxins and resolvins), yielding their corresponding keto (oxo) metabolites. Decreases the levels of the pro-proliferative prostaglandins such as prostaglandin E2 (whose activity is increased in cancer because of an increase in the expression of cyclooxygenase 2) and generates oxo-fatty acid products that can profoundly influence cell function by abrogating pro-inflammatory cytokine expression. Converts resolvins E1, D1 and D2 to their oxo products, which represents a mode of resolvin inactivation. Resolvin E1 plays important roles during the resolution phase of acute inflammation, while resolvins D1 and D2 have a unique role in obesity-induced adipose inflammation. This is 15-hydroxyprostaglandin dehydrogenase [NAD(+)] (Hpgd) from Rattus norvegicus (Rat).